A 169-amino-acid chain; its full sequence is X polypeptide (169 aa).

It belongs to the IagB/IpgF/P19 family.

The protein is X polypeptide (yubQ) of Escherichia coli (strain K12).